The sequence spans 431 residues: Serine/threonine-protein kinase Sgk1 (431 aa).

Residues Leu58–Ala93 form a disordered region. Positions Gln81–Ala93 are enriched in polar residues. The 258-residue stretch at Phe98 to Phe355 folds into the Protein kinase domain. ATP-binding positions include Ile104–Val112 and Lys127. Residue Asp222 is the Proton acceptor of the active site. In terms of domain architecture, AGC-kinase C-terminal spans Ser356–Leu431.

Belongs to the protein kinase superfamily. AGC Ser/Thr protein kinase family.

The protein resides in the cytoplasm. It is found in the nucleus. The protein localises to the endoplasmic reticulum. It catalyses the reaction L-seryl-[protein] + ATP = O-phospho-L-seryl-[protein] + ADP + H(+). The catalysed reaction is L-threonyl-[protein] + ATP = O-phospho-L-threonyl-[protein] + ADP + H(+). Protein kinase that may play an important role in cellular stress response. May be involved in the regulation of processes such as cell survival, neuronal excitability and renal sodium excretion. The chain is Serine/threonine-protein kinase Sgk1 (sgk1) from Fundulus heteroclitus (Killifish).